Reading from the N-terminus, the 146-residue chain is Nucleoside diphosphate kinase (146 aa).

Residues Lys11, Phe59, Arg87, Thr93, Arg104, and Asn114 each contribute to the ATP site. Residue His117 is the Pros-phosphohistidine intermediate of the active site.

The protein belongs to the NDK family. As to quaternary structure, homotetramer. Requires Mg(2+) as cofactor.

The protein resides in the cytoplasm. It catalyses the reaction a 2'-deoxyribonucleoside 5'-diphosphate + ATP = a 2'-deoxyribonucleoside 5'-triphosphate + ADP. The catalysed reaction is a ribonucleoside 5'-diphosphate + ATP = a ribonucleoside 5'-triphosphate + ADP. Major role in the synthesis of nucleoside triphosphates other than ATP. The ATP gamma phosphate is transferred to the NDP beta phosphate via a ping-pong mechanism, using a phosphorylated active-site intermediate. This is Nucleoside diphosphate kinase from Anaplasma marginale (strain Florida).